The sequence spans 219 residues: Oligoribonuclease (219 aa).

The Exonuclease domain occupies Leu19 to Leu184. Residue Tyr141 is part of the active site.

Belongs to the oligoribonuclease family.

It localises to the cytoplasm. In terms of biological role, 3'-to-5' exoribonuclease specific for small oligoribonucleotides. This chain is Oligoribonuclease, found in Corynebacterium glutamicum (strain R).